The following is a 448-amino-acid chain: C4-dicarboxylate transport protein (448 aa).

Helical transmembrane passes span 20–38 (LYFQ…GHFY), 53–75 (IRLV…IAGM), 88–110 (AMIY…ANTV), 161–178 (ILQV…LGIV), 199–220 (LVAI…FTIG), 230–252 (LAML…LGAV), 325–347 (LFIA…LLVA), and 362–384 (FITL…ALIL).

The protein belongs to the dicarboxylate/amino acid:cation symporter (DAACS) (TC 2.A.23) family.

The protein localises to the cell inner membrane. Functionally, responsible for the transport of dicarboxylates such as succinate, fumarate, and malate from the periplasm across the membrane. This Agrobacterium fabrum (strain C58 / ATCC 33970) (Agrobacterium tumefaciens (strain C58)) protein is C4-dicarboxylate transport protein.